We begin with the raw amino-acid sequence, 388 residues long: Deoxyguanosinetriphosphate triphosphohydrolase-like protein (388 aa).

Residues 24-44 (HSAQTRGRVHAEPPSTSRTEF) form a disordered region. The region spanning 78–209 (RLTHSLEVAQ…ANLADEVAYN (132 aa)) is the HD domain.

This sequence belongs to the dGTPase family. Type 2 subfamily.

The chain is Deoxyguanosinetriphosphate triphosphohydrolase-like protein from Ralstonia pickettii (strain 12J).